The chain runs to 484 residues: Probable glycine dehydrogenase (decarboxylating) subunit 2 (484 aa).

The residue at position 264 (Lys264) is an N6-(pyridoxal phosphate)lysine.

It belongs to the GcvP family. C-terminal subunit subfamily. As to quaternary structure, the glycine cleavage system is composed of four proteins: P, T, L and H. In this organism, the P 'protein' is a heterodimer of two subunits. It depends on pyridoxal 5'-phosphate as a cofactor.

The catalysed reaction is N(6)-[(R)-lipoyl]-L-lysyl-[glycine-cleavage complex H protein] + glycine + H(+) = N(6)-[(R)-S(8)-aminomethyldihydrolipoyl]-L-lysyl-[glycine-cleavage complex H protein] + CO2. In terms of biological role, the glycine cleavage system catalyzes the degradation of glycine. The P protein binds the alpha-amino group of glycine through its pyridoxal phosphate cofactor; CO(2) is released and the remaining methylamine moiety is then transferred to the lipoamide cofactor of the H protein. This is Probable glycine dehydrogenase (decarboxylating) subunit 2 from Legionella pneumophila (strain Corby).